We begin with the raw amino-acid sequence, 423 residues long: Tegument protein UL43 (423 aa).

The span at 1 to 12 (MEKTPAETTAVS) shows a compositional bias: polar residues. Residues 1 to 46 (MEKTPAETTAVSAGNVPRDSIPCITNVSADTRGRTRPSRPATVPQR) are disordered.

Belongs to the herpesviridae US22 family.

It localises to the virion tegument. The sequence is that of Tegument protein UL43 (UL43) from Homo sapiens (Human).